Consider the following 467-residue polypeptide: Chromosomal replication initiator protein DnaA (467 aa).

Residues 1-85 (MSLSLWQQCL…FEVGAKPASS (85 aa)) form a domain I, interacts with DnaA modulators region. The interval 85–130 (SLQKGAVSPAAAAIPAAQVQTARVAPTIVRPGWDNVPAPAEPTYRS) is domain II. The tract at residues 131–347 (NVNVKHTFDN…GALNRVIANA (217 aa)) is domain III, AAA+ region. Residues G175, G177, K178, and T179 each contribute to the ATP site. The interval 348 to 467 (NFTGRAITID…FSNLIRTLSS (120 aa)) is domain IV, binds dsDNA.

This sequence belongs to the DnaA family. In terms of assembly, oligomerizes as a right-handed, spiral filament on DNA at oriC.

The protein resides in the cytoplasm. Plays an essential role in the initiation and regulation of chromosomal replication. ATP-DnaA binds to the origin of replication (oriC) to initiate formation of the DNA replication initiation complex once per cell cycle. Binds the DnaA box (a 9 base pair repeat at the origin) and separates the double-stranded (ds)DNA. Forms a right-handed helical filament on oriC DNA; dsDNA binds to the exterior of the filament while single-stranded (ss)DNA is stabiized in the filament's interior. The ATP-DnaA-oriC complex binds and stabilizes one strand of the AT-rich DNA unwinding element (DUE), permitting loading of DNA polymerase. After initiation quickly degrades to an ADP-DnaA complex that is not apt for DNA replication. Binds acidic phospholipids. This chain is Chromosomal replication initiator protein DnaA, found in Klebsiella pneumoniae (strain 342).